The chain runs to 908 residues: MRKNKVLIGLFFCIALTVIFLKKIVNVIINIKWFREVGYLSVYLKRFTSVISLFILVFLICFVAIKTYCRSIKKNLSKNESFIDVDIESKSKGKKIINALTLIISLFIALNFSLGYWDKILEFMNSSKFNVKDPIFNMDISFFIFKLPLIESIYNSLLSLLILLAVITVIVYMFLNIKDRVTLGHKIDRNFININNFKSGITKFAGKQLAILGALLLLCISVGYLIKAWNLSYSPRGVAFGASYTDTKITLKFYIAISIVSIISSIIVAFSILKSKVKPIISCVILIAVLVISERVVSGAWQMLVVKSNERRLETPFIEYNMKYTKKAFGIANVKEQLYPLTNVLNKKSLENNKETINNIKINSVGQALEFYNQVESKKNYYIFNDIDIDRYKINGKYNQVFIAPREIDYEKLQEKANTWQNKHLTYTHGYGVVMSKVNSVTAEGKPDFVIKDMPLVNTSGVEIKDPRIYYGEKTNEYAIVNTKLNEMDYLKDSGENATKNYDGDSGIKMSFINRILFAINKGDMKFLLSSDITSDSRILMNRNIVNRVKKIAPFLKYDNNPYIVINNGKLYWVIDAYTVSNAYPFSEPIGDINYMRNSVKVIIDAVNGTTNFYIIDKNDPIISTYSKIFPGLFKNESEIKEGFREHFKYPQDYFAIQCKAMERYHVKNSGTFFSGQNVWDVAKTQKDIDGKKSVNEASYLIMKLPGEKNEEMILLQYFNQYQRENMIALFGARMDNSNYGNLVLYKFPTTKSETVNSPILFKQKIKQDTTISKELSLWDAKGSQVQFGDTMIIPIDNSLLYVEPLYLRADSERSIPEMKRVIVAYGDKLILAENIEKALSQLFDYDKKNDAKEEVILNKKESVPDELKDAKELYEKAIEAQKQGNWAEYGENIKRLGDILNKLNHPK.

7 consecutive transmembrane segments (helical) span residues 8–28 (IGLF…VNVI), 47–67 (FTSV…AIKT), 96–116 (IINA…SLGY), 157–177 (LLSL…FLNI), 209–229 (LAIL…IKAW), 253–273 (FYIA…FSIL), and 280–300 (IISC…VSGA).

This sequence belongs to the UPF0182 family.

The protein resides in the cell membrane. The protein is UPF0182 protein NT01CX_0852 of Clostridium novyi (strain NT).